The chain runs to 107 residues: UPF0102 protein CTN_0433 (107 aa).

Belongs to the UPF0102 family.

This is UPF0102 protein CTN_0433 from Thermotoga neapolitana (strain ATCC 49049 / DSM 4359 / NBRC 107923 / NS-E).